A 97-amino-acid chain; its full sequence is MLIPEDDKLDDEKMINIAKKLWFIGFFFLPWVWLINILYFIPYRNSLNDKVKWYLKFSLIGFLGYSTIFMGWMGIYLVNRNKWGAFGDDISITIPFG.

Topologically, residues 1 to 20 (MLIPEDDKLDDEKMINIAKK) are cytoplasmic. An intramembrane region (helical) is located at residues 21–39 (LWFIGFFFLPWVWLINILY). At 40–55 (FIPYRNSLNDKVKWYL) the chain is on the cytoplasmic side. Residues 56-76 (KFSLIGFLGYSTIFMGWMGIY) traverse the membrane as a helical segment. Residues 77–97 (LVNRNKWGAFGDDISITIPFG) are Lumenal-facing.

This sequence belongs to the PEN-2 family. As to quaternary structure, the functional gamma-secretase complex is composed of at least four polypeptides: a presenilin homodimer, nicastrin, aph1 and psenen.

The protein localises to the endoplasmic reticulum membrane. It is found in the golgi apparatus. Its subcellular location is the golgi stack membrane. It localises to the cell membrane. The protein resides in the membrane. Its function is as follows. Essential subunit of the gamma-secretase complex, an endoprotease complex that catalyzes the intramembrane cleavage of integral membrane proteins such as Notch receptors. The gamma-secretase complex plays a role in Notch and Wnt signaling cascades and regulation of downstream processes via its role in processing key regulatory proteins. The polypeptide is Probable gamma-secretase subunit PEN-2 (psenen) (Dictyostelium discoideum (Social amoeba)).